Here is a 146-residue protein sequence, read N- to C-terminus: Large ribosomal subunit protein uL15 (146 aa).

The segment covering 1-13 (MKLHELKPAEGSR) has biased composition (basic and acidic residues). The disordered stretch occupies residues 1 to 56 (MKLHELKPAEGSRKVRNRVGRGAATGNGKTSGRGQKGQKARSGGSVRPGFEGGQLP). Positions 23 to 35 (AATGNGKTSGRGQ) are enriched in gly residues.

This sequence belongs to the universal ribosomal protein uL15 family. Part of the 50S ribosomal subunit.

Binds to the 23S rRNA. This chain is Large ribosomal subunit protein uL15, found in Staphylococcus saprophyticus subsp. saprophyticus (strain ATCC 15305 / DSM 20229 / NCIMB 8711 / NCTC 7292 / S-41).